The following is a 263-amino-acid chain: Glutamate/glutamine/aspartate/asparagine transport ATP-binding protein BztD (263 aa).

One can recognise an ABC transporter domain in the interval 23 to 257 (IQISQMNKWY…PQSERTKQFL (235 aa)). An ATP-binding site is contributed by 55-62 (GPSGSGKS).

It belongs to the ABC transporter superfamily. As to quaternary structure, bztB and BztC form a heterodimer which can form a membrane complex with a homodimer of BztD.

The protein resides in the cell membrane. Functionally, part of a binding-protein-dependent transport system for glutamate, glutamine, aspartate, asparagine. Probably responsible for energy coupling to the transport system. The sequence is that of Glutamate/glutamine/aspartate/asparagine transport ATP-binding protein BztD (bztD) from Rhodobacter capsulatus (strain ATCC BAA-309 / NBRC 16581 / SB1003).